The chain runs to 115 residues: Large ribosomal subunit protein uL22 (115 aa).

Belongs to the universal ribosomal protein uL22 family. In terms of assembly, part of the 50S ribosomal subunit.

In terms of biological role, this protein binds specifically to 23S rRNA; its binding is stimulated by other ribosomal proteins, e.g. L4, L17, and L20. It is important during the early stages of 50S assembly. It makes multiple contacts with different domains of the 23S rRNA in the assembled 50S subunit and ribosome. The globular domain of the protein is located near the polypeptide exit tunnel on the outside of the subunit, while an extended beta-hairpin is found that lines the wall of the exit tunnel in the center of the 70S ribosome. The polypeptide is Large ribosomal subunit protein uL22 (Endomicrobium trichonymphae).